The primary structure comprises 302 residues: Putative S-adenosyl-L-methionine-dependent methyltransferase MMAR_1068 (302 aa).

S-adenosyl-L-methionine is bound by residues Asp127 and 156 to 157 (DL).

Belongs to the UPF0677 family.

Its function is as follows. Exhibits S-adenosyl-L-methionine-dependent methyltransferase activity. The protein is Putative S-adenosyl-L-methionine-dependent methyltransferase MMAR_1068 of Mycobacterium marinum (strain ATCC BAA-535 / M).